A 333-amino-acid polypeptide reads, in one-letter code: MDLINSTDYLINASTLVRNSTQFLAPASKMIIALSLYISSIIGTITNGLYLWVLRFKMKQTVNTLLFFHLILSYFISTMILPFMATSQLQDNHWNFGTALCKVFNGTLSLGMFTSVFFLSAIGLDRYLLTLHPVWSQQHRTPRWASSIVLGVWISAAALSIPYLIFRETHHDRKGKVTCQNNYAVSTNWESKEMQASRQWIHVACFISRFLLGFLLPFFIIIFCYERVASKVKERSLFKSSKPFKVMMTAIISFFVCWMPYHIHQGLLLTTNQSLLLELTLILTVLTTSFNTIFSPTLYLFVGENFKKVFKKSILALFESTFSEDSSVERTQT.

Residues 1–30 are Extracellular-facing; sequence MDLINSTDYLINASTLVRNSTQFLAPASKM. N-linked (GlcNAc...) asparagine glycans are attached at residues N5, N12, and N19. Residues 31–53 traverse the membrane as a helical segment; it reads IIALSLYISSIIGTITNGLYLWV. The Cytoplasmic portion of the chain corresponds to 54–64; it reads LRFKMKQTVNT. Residues 65-86 form a helical membrane-spanning segment; sequence LLFFHLILSYFISTMILPFMAT. Residues 87–103 lie on the Extracellular side of the membrane; it reads SQLQDNHWNFGTALCKV. C101 and C179 are disulfide-bonded. The helical transmembrane segment at 104 to 124 threads the bilayer; sequence FNGTLSLGMFTSVFFLSAIGL. Topologically, residues 125–143 are cytoplasmic; it reads DRYLLTLHPVWSQQHRTPR. Residues 144-165 form a helical membrane-spanning segment; that stretch reads WASSIVLGVWISAAALSIPYLI. Topologically, residues 166-209 are extracellular; the sequence is FRETHHDRKGKVTCQNNYAVSTNWESKEMQASRQWIHVACFISR. The helical transmembrane segment at 210 to 230 threads the bilayer; the sequence is FLLGFLLPFFIIIFCYERVAS. Residues 231–246 are Cytoplasmic-facing; it reads KVKERSLFKSSKPFKV. Residues 247–268 form a helical membrane-spanning segment; sequence MMTAIISFFVCWMPYHIHQGLL. The Extracellular portion of the chain corresponds to 269-283; sequence LTTNQSLLLELTLIL. N272 carries N-linked (GlcNAc...) asparagine glycosylation. The chain crosses the membrane as a helical span at residues 284–303; sequence TVLTTSFNTIFSPTLYLFVG. The Cytoplasmic segment spans residues 304 to 333; the sequence is ENFKKVFKKSILALFESTFSEDSSVERTQT.

This sequence belongs to the G-protein coupled receptor 1 family. Expressed in spleen, lung, heart, liver, kidney, pancreas, thymus, gonads and leukocytes.

The protein resides in the cell membrane. In terms of biological role, orphan receptor; could be a chemoattractant receptor. The chain is Probable G-protein coupled receptor 33 (GPR33) from Homo sapiens (Human).